The chain runs to 176 residues: NAD(P)H-quinone oxidoreductase subunit 6, chloroplastic (176 aa).

The next 5 helical transmembrane spans lie at 10 to 30 (FLLVFLGSGLLVGGLGVVLLP), 32 to 52 (PIFSAFSLGFVLVCISLLYIL), 61 to 81 (AQLLIYVGAINVLIIFAVMFM), 92 to 112 (LWTIGNGITSLVCTTILFLLM), and 152 to 172 (FFLPFELISIILLVALIGAIS).

It belongs to the complex I subunit 6 family. As to quaternary structure, NDH is composed of at least 16 different subunits, 5 of which are encoded in the nucleus.

Its subcellular location is the plastid. It is found in the chloroplast thylakoid membrane. It catalyses the reaction a plastoquinone + NADH + (n+1) H(+)(in) = a plastoquinol + NAD(+) + n H(+)(out). It carries out the reaction a plastoquinone + NADPH + (n+1) H(+)(in) = a plastoquinol + NADP(+) + n H(+)(out). NDH shuttles electrons from NAD(P)H:plastoquinone, via FMN and iron-sulfur (Fe-S) centers, to quinones in the photosynthetic chain and possibly in a chloroplast respiratory chain. The immediate electron acceptor for the enzyme in this species is believed to be plastoquinone. Couples the redox reaction to proton translocation, and thus conserves the redox energy in a proton gradient. In Arabidopsis thaliana (Mouse-ear cress), this protein is NAD(P)H-quinone oxidoreductase subunit 6, chloroplastic (ndhG).